Here is a 399-residue protein sequence, read N- to C-terminus: S-adenosylmethionine synthase (399 aa).

H17 is an ATP binding site. A Mg(2+)-binding site is contributed by D19. E45 provides a ligand contact to K(+). Positions 58 and 101 each coordinate L-methionine. Residues 101-111 (QSADIAMGVDQ) form a flexible loop region. ATP-binding positions include 177–179 (DGK), 244–245 (RF), D253, 259–260 (RK), A276, and K280. D253 contacts L-methionine. K284 lines the L-methionine pocket.

This sequence belongs to the AdoMet synthase family. In terms of assembly, homotetramer; dimer of dimers. The cofactor is Mg(2+). K(+) is required as a cofactor.

The protein resides in the cytoplasm. The enzyme catalyses L-methionine + ATP + H2O = S-adenosyl-L-methionine + phosphate + diphosphate. Its pathway is amino-acid biosynthesis; S-adenosyl-L-methionine biosynthesis; S-adenosyl-L-methionine from L-methionine: step 1/1. In terms of biological role, catalyzes the formation of S-adenosylmethionine (AdoMet) from methionine and ATP. The overall synthetic reaction is composed of two sequential steps, AdoMet formation and the subsequent tripolyphosphate hydrolysis which occurs prior to release of AdoMet from the enzyme. This is S-adenosylmethionine synthase from Bacillus cereus (strain B4264).